Reading from the N-terminus, the 382-residue chain is S-adenosylmethionine synthase (382 aa).

Residue H16 participates in ATP binding. Mg(2+) is bound at residue D18. E44 is a binding site for K(+). Residues E57 and Q100 each contribute to the L-methionine site. The interval 100–110 (QSPDIAQGVDN) is flexible loop. Residues 165 to 167 (DAK), 231 to 232 (RF), D240, 246 to 247 (RK), and K267 contribute to the ATP site. Residue D240 coordinates L-methionine. Residue K271 coordinates L-methionine.

It belongs to the AdoMet synthase family. Homotetramer; dimer of dimers. Mg(2+) is required as a cofactor. It depends on K(+) as a cofactor.

The protein resides in the cytoplasm. It catalyses the reaction L-methionine + ATP + H2O = S-adenosyl-L-methionine + phosphate + diphosphate. It functions in the pathway amino-acid biosynthesis; S-adenosyl-L-methionine biosynthesis; S-adenosyl-L-methionine from L-methionine: step 1/1. Its function is as follows. Catalyzes the formation of S-adenosylmethionine (AdoMet) from methionine and ATP. The overall synthetic reaction is composed of two sequential steps, AdoMet formation and the subsequent tripolyphosphate hydrolysis which occurs prior to release of AdoMet from the enzyme. The polypeptide is S-adenosylmethionine synthase (Legionella pneumophila (strain Paris)).